The primary structure comprises 256 residues: Thiazole synthase (256 aa).

K96 functions as the Schiff-base intermediate with DXP in the catalytic mechanism. 1-deoxy-D-xylulose 5-phosphate contacts are provided by residues G157, 183–184 (AG), and 205–206 (NT).

Belongs to the ThiG family. As to quaternary structure, homotetramer. Forms heterodimers with either ThiH or ThiS.

It is found in the cytoplasm. It catalyses the reaction [ThiS sulfur-carrier protein]-C-terminal-Gly-aminoethanethioate + 2-iminoacetate + 1-deoxy-D-xylulose 5-phosphate = [ThiS sulfur-carrier protein]-C-terminal Gly-Gly + 2-[(2R,5Z)-2-carboxy-4-methylthiazol-5(2H)-ylidene]ethyl phosphate + 2 H2O + H(+). Its pathway is cofactor biosynthesis; thiamine diphosphate biosynthesis. In terms of biological role, catalyzes the rearrangement of 1-deoxy-D-xylulose 5-phosphate (DXP) to produce the thiazole phosphate moiety of thiamine. Sulfur is provided by the thiocarboxylate moiety of the carrier protein ThiS. In vitro, sulfur can be provided by H(2)S. In Bacillus mycoides (strain KBAB4) (Bacillus weihenstephanensis), this protein is Thiazole synthase.